A 212-amino-acid chain; its full sequence is Ribosomal RNA small subunit methyltransferase G (212 aa).

S-adenosyl-L-methionine is bound by residues G72, L77, 123 to 124, and R138; that span reads VE.

It belongs to the methyltransferase superfamily. RNA methyltransferase RsmG family.

The protein localises to the cytoplasm. It carries out the reaction guanosine(527) in 16S rRNA + S-adenosyl-L-methionine = N(7)-methylguanosine(527) in 16S rRNA + S-adenosyl-L-homocysteine. Specifically methylates the N7 position of guanine in position 527 of 16S rRNA. This Histophilus somni (strain 2336) (Haemophilus somnus) protein is Ribosomal RNA small subunit methyltransferase G.